Here is a 242-residue protein sequence, read N- to C-terminus: Uridylate kinase (242 aa).

An ATP-binding site is contributed by 15-18 (KLSG). The involved in allosteric activation by GTP stretch occupies residues 23 to 28 (GAEGFG). G57 provides a ligand contact to UMP. 2 residues coordinate ATP: G58 and R62. Residues D77 and 138–145 (TGNPFFTT) contribute to the UMP site. T165, Y171, and D174 together coordinate ATP.

This sequence belongs to the UMP kinase family. As to quaternary structure, homohexamer.

It is found in the cytoplasm. The enzyme catalyses UMP + ATP = UDP + ADP. It functions in the pathway pyrimidine metabolism; CTP biosynthesis via de novo pathway; UDP from UMP (UMPK route): step 1/1. Its activity is regulated as follows. Allosterically activated by GTP. Inhibited by UTP. In terms of biological role, catalyzes the reversible phosphorylation of UMP to UDP. This Photorhabdus laumondii subsp. laumondii (strain DSM 15139 / CIP 105565 / TT01) (Photorhabdus luminescens subsp. laumondii) protein is Uridylate kinase.